Here is a 122-residue protein sequence, read N- to C-terminus: Large ribosomal subunit protein uL14 (122 aa).

This sequence belongs to the universal ribosomal protein uL14 family. Part of the 50S ribosomal subunit. Forms a cluster with proteins L3 and L19. In the 70S ribosome, L14 and L19 interact and together make contacts with the 16S rRNA in bridges B5 and B8.

Its function is as follows. Binds to 23S rRNA. Forms part of two intersubunit bridges in the 70S ribosome. This chain is Large ribosomal subunit protein uL14, found in Kosmotoga olearia (strain ATCC BAA-1733 / DSM 21960 / TBF 19.5.1).